Here is a 380-residue protein sequence, read N- to C-terminus: Variant-surface-glycoprotein phospholipase C (380 aa).

The PI-PLC X-box domain maps to 31–205 (ITQVCFVGSH…SRRRIFLVVG (175 aa)).

In terms of assembly, monomer.

It is found in the membrane. The enzyme catalyses a 6-(alpha-D-glucosaminyl)-1-(1,2-diacyl-sn-glycero-3-phospho)-1D-myo-inositol = 6-(alpha-D-glucosaminyl)-1D-myo-inositol 1,2-cyclic phosphate + a 1,2-diacyl-sn-glycerol. By hydrolysis of the attached glycolipid, releases soluble variant surface glycoprotein containing phosphoinositol from the cell wall of T.brucei after cell lysis. It also cleaves similar membrane anchors on some mammalian proteins. VSG lipase may play a role in processes such as parasite differentiation or antigenic variation. The polypeptide is Variant-surface-glycoprotein phospholipase C (Trypanosoma cruzi).